Here is a 132-residue protein sequence, read N- to C-terminus: Acyl carrier protein 3, chloroplastic (132 aa).

The transit peptide at 1-49 directs the protein to the chloroplast; sequence MASIAGSAVSFAKPVKAINTNSLSFSGARRGNAFLRLQPVPMRFAVCCS. One can recognise a Carrier domain in the interval 52–127; sequence QDTVEKVCEI…DAATLIDKLV (76 aa). S87 bears the O-(pantetheine 4'-phosphoryl)serine mark.

It belongs to the acyl carrier protein (ACP) family. Post-translationally, 4'-phosphopantetheine is transferred from CoA to a specific serine of apo-ACP by acpS. This modification is essential for activity because fatty acids are bound in thioester linkage to the sulfhydryl of the prosthetic group.

The protein resides in the plastid. It localises to the chloroplast. It participates in lipid metabolism; fatty acid biosynthesis. Carrier of the growing fatty acid chain in fatty acid biosynthesis. This chain is Acyl carrier protein 3, chloroplastic (ACL1.3), found in Hordeum vulgare (Barley).